Consider the following 294-residue polypeptide: Beta-glucoside kinase (294 aa).

Residue 5–11 (AFDIGGT) participates in ATP binding.

This sequence belongs to the ROK (NagC/XylR) family.

The enzyme catalyses D-cellobiose + ATP = 6-phospho-beta-D-glucosyl-(1-&gt;4)-D-glucose + ADP + H(+). In terms of biological role, catalyzes the ATP-dependent phosphorylation of cellobiose to produce cellobiose-6'-P. May have a dual role of kinase and transcriptional regulator of the cellobiose-PTS operon. In Listeria innocua serovar 6a (strain ATCC BAA-680 / CLIP 11262), this protein is Beta-glucoside kinase (bglK).